We begin with the raw amino-acid sequence, 380 residues long: 3-dehydroquinate synthase (380 aa).

NAD(+)-binding positions include 100 to 104 (GAASD), 124 to 125 (TT), lysine 137, and lysine 146. Positions 179, 251, and 267 each coordinate Zn(2+).

The protein belongs to the sugar phosphate cyclases superfamily. Dehydroquinate synthase family. The cofactor is NAD(+). Requires Co(2+) as cofactor. Zn(2+) is required as a cofactor.

Its subcellular location is the cytoplasm. The catalysed reaction is 7-phospho-2-dehydro-3-deoxy-D-arabino-heptonate = 3-dehydroquinate + phosphate. It functions in the pathway metabolic intermediate biosynthesis; chorismate biosynthesis; chorismate from D-erythrose 4-phosphate and phosphoenolpyruvate: step 2/7. Functionally, catalyzes the conversion of 3-deoxy-D-arabino-heptulosonate 7-phosphate (DAHP) to dehydroquinate (DHQ). The sequence is that of 3-dehydroquinate synthase from Tropheryma whipplei (strain TW08/27) (Whipple's bacillus).